The chain runs to 166 residues: Phospholipase A2 inhibitor (166 aa).

The N-terminal stretch at 1–19 (MRLILLSGLLLLGIFLANG) is a signal peptide. Residues 46-161 (LKGSFLIVHK…CDDNLLVVCE (116 aa)) form the C-type lectin domain. 2 disulfides stabilise this stretch: Cys-83-Cys-160 and Cys-138-Cys-152. Asn-122 is a glycosylation site (N-linked (GlcNAc...) asparagine).

It belongs to the alpha-type phospholipase A2 inhibitor family. In terms of assembly, homotrimer; non-covalently linked. As to expression, expressed by the liver.

The protein resides in the secreted. This phospholipase A2 inhibitor binds directly phospholipase A2 in the presence or absence of calcium. The chain is Phospholipase A2 inhibitor from Bothrops jararacussu (Jararacussu).